The chain runs to 150 residues: Globin-3 (150 aa).

In terms of domain architecture, Globin spans 11–150; that stretch reads PLTAADKTKI…IICILLNSAY (140 aa). Heme b-binding residues include histidine 74 and histidine 106.

It belongs to the globin family. Monomer.

The polypeptide is Globin-3 (Mordacia mordax (Southern hemisphere lamprey)).